The chain runs to 201 residues: Glutathione peroxidase 1 (201 aa).

A Phosphoserine modification is found at S32. Residue U47 is part of the active site. Residue U47 is a non-standard amino acid, selenocysteine. K86 and K112 each carry N6-acetyllysine; alternate. N6-succinyllysine; alternate occurs at positions 86 and 112. K119 carries the N6-acetyllysine modification. K146 carries the N6-acetyllysine; alternate modification. N6-succinyllysine; alternate is present on K146. S195 and S199 each carry phosphoserine.

This sequence belongs to the glutathione peroxidase family. In terms of assembly, homotetramer. Interacts with MIEN1. During periods of oxidative stress, Sec-47 may react with a superoxide radical, irreversibly lose hydroselenide and be converted to dehydroalanine. In terms of tissue distribution, expressed in liver and lung.

Its subcellular location is the cytoplasm. The protein resides in the mitochondrion. It carries out the reaction 2 glutathione + H2O2 = glutathione disulfide + 2 H2O. The enzyme catalyses a hydroperoxy polyunsaturated fatty acid + 2 glutathione = a hydroxy polyunsaturated fatty acid + glutathione disulfide + H2O. The catalysed reaction is tert-butyl hydroperoxide + 2 glutathione = tert-butanol + glutathione disulfide + H2O. It catalyses the reaction cumene hydroperoxide + 2 glutathione = 2-phenylpropan-2-ol + glutathione disulfide + H2O. It carries out the reaction (13S)-hydroperoxy-(9Z,11E)-octadecadienoate + 2 glutathione = (13S)-hydroxy-(9Z,11E)-octadecadienoate + glutathione disulfide + H2O. The enzyme catalyses (9S)-hydroperoxy-(10E,12Z)-octadecadienoate + 2 glutathione = (9S)-hydroxy-(10E,12Z)-octadecadienoate + glutathione disulfide + H2O. The catalysed reaction is (5S)-hydroperoxy-(6E,8Z,11Z,14Z)-eicosatetraenoate + 2 glutathione = (5S)-hydroxy-(6E,8Z,11Z,14Z)-eicosatetraenoate + glutathione disulfide + H2O. It catalyses the reaction (12S)-hydroperoxy-(5Z,8Z,10E,14Z)-eicosatetraenoate + 2 glutathione = (12S)-hydroxy-(5Z,8Z,10E,14Z)-eicosatetraenoate + glutathione disulfide + H2O. It carries out the reaction (12R)-hydroperoxy-(5Z,8Z,10E,14Z)-eicosatetraenoate + 2 glutathione = (12R)-hydroxy-(5Z,8Z,10E,14Z)-eicosatetraenoate + glutathione disulfide + H2O. The enzyme catalyses (15S)-hydroperoxy-(5Z,8Z,11Z,13E)-eicosatetraenoate + 2 glutathione = (15S)-hydroxy-(5Z,8Z,11Z,13E)-eicosatetraenoate + glutathione disulfide + H2O. The catalysed reaction is (5S)-hydroperoxy-(6E,8Z,11Z,14Z,17Z)-eicosapentaenoate + 2 glutathione = (5S)-hydroxy-(6E,8Z,11Z,14Z,17Z)-eicosapentaenoate + glutathione disulfide + H2O. It catalyses the reaction (12S)-hydroperoxy-(5Z,8Z,10E,14Z,17Z)-eicosapentaenoate + 2 glutathione = (12S)-hydroxy-(5Z,8Z,10E,14Z,17Z)-eicosapentaenoate + glutathione disulfide + H2O. It carries out the reaction (15S)-hydroperoxy-(5Z,8Z,11Z,13E,17Z)-eicosapentaenoate + 2 glutathione = (15S)-hydroxy-(5Z,8Z,11Z,13E,17Z)-eicosapentaenoate + glutathione disulfide + H2O. The enzyme catalyses (15S)-hydroperoxy-(11Z,13E)-eicosadienoate + 2 glutathione = (15S)-hydroxy-(11Z,13E)-eicosadienoate + glutathione disulfide + H2O. The catalysed reaction is (17S)-hydroperoxy-(4Z,7Z,10Z,13Z,15E,19Z)-docosahexaenoate + 2 glutathione = (17S)-hydroxy-(4Z,7Z,10Z,13Z,15E,19Z)-docosahexaenoate + glutathione disulfide + H2O. Its function is as follows. Catalyzes the reduction of hydroperoxides in a glutathione-dependent manner thus regulating cellular redox homeostasis. Can reduce small soluble hydroperoxides such as H2O2, cumene hydroperoxide and tert-butyl hydroperoxide, as well as several fatty acid-derived hydroperoxides. In platelets catalyzes the reduction of 12-hydroperoxyeicosatetraenoic acid, the primary product of the arachidonate 12-lipoxygenase pathway. This is Glutathione peroxidase 1 from Rattus norvegicus (Rat).